Reading from the N-terminus, the 66-residue chain is uncharacterized protein (66 aa).

To M.jannaschii MJ0582.

This is an uncharacterized protein from Methanocaldococcus jannaschii (strain ATCC 43067 / DSM 2661 / JAL-1 / JCM 10045 / NBRC 100440) (Methanococcus jannaschii).